The chain runs to 311 residues: uncharacterized protein (311 aa).

The chain crosses the membrane as a helical span at residues 168–188 (FNVMKGAILGLPIIGGIIVGV).

It localises to the cell membrane. This is an uncharacterized protein from Edwardsiella tarda.